We begin with the raw amino-acid sequence, 273 residues long: Undecaprenyl-diphosphatase (273 aa).

Helical transmembrane passes span 18-40 (GLTE…LLGF), 45-65 (AKTF…VVFW), 92-112 (GHIL…HEQI), 114-134 (AIFA…LLLA), 151-171 (LTYL…WPGF), 189-209 (YAAS…ATVL), 225-245 (MFAI…KFFL), and 253-273 (FVPF…ILIG).

The protein belongs to the UppP family.

It is found in the cell inner membrane. It catalyses the reaction di-trans,octa-cis-undecaprenyl diphosphate + H2O = di-trans,octa-cis-undecaprenyl phosphate + phosphate + H(+). Functionally, catalyzes the dephosphorylation of undecaprenyl diphosphate (UPP). Confers resistance to bacitracin. This is Undecaprenyl-diphosphatase from Sodalis glossinidius (strain morsitans).